The chain runs to 109 residues: Cell division protein ZapA (109 aa).

Positions 22–99 (EQQDALNLAA…IEQALLEQGR (78 aa)) form a coiled coil.

This sequence belongs to the ZapA family. Type 1 subfamily. Homodimer. Interacts with FtsZ.

Its subcellular location is the cytoplasm. Its function is as follows. Activator of cell division through the inhibition of FtsZ GTPase activity, therefore promoting FtsZ assembly into bundles of protofilaments necessary for the formation of the division Z ring. It is recruited early at mid-cell but it is not essential for cell division. This chain is Cell division protein ZapA, found in Erwinia tasmaniensis (strain DSM 17950 / CFBP 7177 / CIP 109463 / NCPPB 4357 / Et1/99).